Consider the following 375-residue polypeptide: Putative disease resistance protein At3g15700 (375 aa).

Residues Lys-17 to Gln-49 are a coiled coil. In terms of domain architecture, NB-ARC spans Asp-158–Gly-372. Gly-167–Thr-174 lines the ATP pocket.

Functionally, potential disease resistance protein. The sequence is that of Putative disease resistance protein At3g15700 from Arabidopsis thaliana (Mouse-ear cress).